Consider the following 295-residue polypeptide: UDP-N-acetylenolpyruvoylglucosamine reductase (295 aa).

In terms of domain architecture, FAD-binding PCMH-type spans 23–188 (KVGGPADFLA…ISAKFALKPG (166 aa)). Residue Arg-167 is part of the active site. The active-site Proton donor is the Ser-217. Glu-287 is an active-site residue.

Belongs to the MurB family. FAD is required as a cofactor.

Its subcellular location is the cytoplasm. It catalyses the reaction UDP-N-acetyl-alpha-D-muramate + NADP(+) = UDP-N-acetyl-3-O-(1-carboxyvinyl)-alpha-D-glucosamine + NADPH + H(+). It functions in the pathway cell wall biogenesis; peptidoglycan biosynthesis. Functionally, cell wall formation. The chain is UDP-N-acetylenolpyruvoylglucosamine reductase from Streptococcus pyogenes serotype M18 (strain MGAS8232).